A 369-amino-acid polypeptide reads, in one-letter code: Septin-5 (369 aa).

T13 is subject to Phosphothreonine. The 274-residue stretch at 41–314 (KGFDFTLMVA…ENYRAHCIQQ (274 aa)) folds into the Septin-type G domain. A G1 motif region spans residues 51-58 (GESGLGKS). GTP-binding positions include 51–58 (GESGLGKS), T85, and G111. Residues 108–111 (DTPG) form a G3 motif region. Position 168 is an omega-N-methylarginine (R168). A G4 motif region spans residues 189–192 (AKAD). A GTP-binding site is contributed by 190-198 (KADCLVPSE). At S225 the chain carries Phosphoserine. Residues G248 and R263 each contribute to the GTP site. Position 327 is a phosphoserine (S327). A Phosphothreonine modification is found at T336. Residues 338–369 (DAETEKLIRMKDEELRRMQEMLQRMKQQMQDQ) are a coiled coil.

The protein belongs to the TRAFAC class TrmE-Era-EngA-EngB-Septin-like GTPase superfamily. Septin GTPase family. As to quaternary structure, septins polymerize into heterooligomeric protein complexes that form filaments, and can associate with cellular membranes, actin filaments and microtubules. GTPase activity is required for filament formation. Interacts with SEPTIN2 and SEPTIN5. In platelets, associated with a complex containing STX4. Interacts with PRKN; this interaction leads to SEPTIN5 ubiquitination and degradation. Interacts with DYRK1A. Interacts with STX1A; in the cerebellar cortex. Phosphorylated by DYRK1A. In platelets, phosphorylated in response to thrombin, phorbol-12-myristate-13-acetate and collagen. Expressed at high levels in the CNS, as well as in heart and platelets (at protein level).

It localises to the cytoplasm. It is found in the cytoskeleton. Filament-forming cytoskeletal GTPase. May play a role in cytokinesis (Potential). May play a role in platelet secretion. The polypeptide is Septin-5 (Homo sapiens (Human)).